The chain runs to 503 residues: MAAAVATVQRPEAETVEEASNLQWPLPPEHRPSGAATRPGDSEDAPVRPLCKPRGICSRAYFLVLMVFVHLYLGNVLALLLFVHYSNGDESTDPGPQRREQSPQPVPTLGPLTRLEGIKVGYERKVQVVAGRDHFIRTLSLKPLLFEIPGFLSDEECRLIIHLAQMKGLQRSQILPTEEYEEAMSAMQVSQLDLFQLLDQNHDGRLQLREVLAQTRLGNGRWMTPENIQEMYSAIKADPDGDGVLSLQEFSNMDLRDFHKYMRSHKAESNELVRNSHHTWLHQGEGAHHVMRAIRQRVLRLTRLSPEIVEFSEPLQVVRYGEGGHYHAHVDSGPVYPETICSHTKLVANESVPFETSCRYMTVLFYLNNVTGGGETVFPVADNRTYDEMSLIQDDVDLRDTRRHCDKGNLRVKPQQGTAVFWYNYLPDGQGWVGEVDDYSLHGGCLVTRGTKWIANNWINVDPSRARQALFQQEMARLAREGGMDSQPEWALDRAYSDARVEL.

The interval 1–49 is disordered; the sequence is MAAAVATVQRPEAETVEEASNLQWPLPPEHRPSGAATRPGDSEDAPVRP. Topologically, residues 1 to 61 are cytoplasmic; sequence MAAAVATVQR…KPRGICSRAY (61 aa). The chain crosses the membrane as a helical; Signal-anchor for type II membrane protein span at residues 62–82; sequence FLVLMVFVHLYLGNVLALLLF. Over 83 to 503 the chain is Lumenal; it reads VHYSNGDEST…RAYSDARVEL (421 aa). The tract at residues 90–110 is disordered; the sequence is ESTDPGPQRREQSPQPVPTLG. 2 EF-hand domains span residues 186 to 221 and 225 to 260; these read AMQV…GNGR and PENI…DFHK. The Ca(2+) site is built by Asp199, Asn201, Asp203, Arg205, Glu210, Asp238, Asp240, Asp242, and Glu249. Residues 310–461 form the Fe2OG dioxygenase domain; the sequence is EFSEPLQVVR…KWIANNWINV (152 aa). 2 residues coordinate Fe cation: His329 and Asp331. N-linked (GlcNAc...) asparagine glycans are attached at residues Asn349 and Asn369. Glu375 lines the Fe cation pocket. An N-linked (GlcNAc...) asparagine glycan is attached at Asn383. Residue Lys452 participates in 2-oxoglutarate binding.

In terms of assembly, homodimer. It depends on Fe(2+) as a cofactor. L-ascorbate is required as a cofactor. Glycosylated. In terms of tissue distribution, highest expression levels are detected in the eye and brain, especially in the retinal epithelium cells and cortical neurons. Also expressed in skeletal muscle, lung, heart, adrenal gland, kidney, prostate, thyroid and testis.

It is found in the endoplasmic reticulum membrane. The catalysed reaction is L-prolyl-[hypoxia-inducible factor alpha subunit] + 2-oxoglutarate + O2 = trans-4-hydroxy-L-prolyl-[hypoxia-inducible factor alpha subunit] + succinate + CO2. Its function is as follows. Catalyzes the post-translational formation of 4-hydroxyproline in hypoxia-inducible factor (HIF) alpha proteins. Hydroxylates HIF1A at 'Pro-402' and 'Pro-564'. May function as a cellular oxygen sensor and, under normoxic conditions, may target HIF through the hydroxylation for proteasomal degradation via the von Hippel-Lindau ubiquitination complex. The polypeptide is Transmembrane prolyl 4-hydroxylase (P4htm) (Mus musculus (Mouse)).